The sequence spans 427 residues: Trigger factor (427 aa).

A PPIase FKBP-type domain is found at 163 to 248 (GDTVVIDFEG…VHEVKAKELP (86 aa)).

It belongs to the FKBP-type PPIase family. Tig subfamily.

It is found in the cytoplasm. The catalysed reaction is [protein]-peptidylproline (omega=180) = [protein]-peptidylproline (omega=0). In terms of biological role, involved in protein export. Acts as a chaperone by maintaining the newly synthesized protein in an open conformation. Functions as a peptidyl-prolyl cis-trans isomerase. The protein is Trigger factor of Enterococcus faecalis (strain ATCC 700802 / V583).